The primary structure comprises 434 residues: Beta-enolase (434 aa).

A2 bears the N-acetylalanine mark. Position 72 is a phosphothreonine (T72). S83 and S157 each carry phosphoserine. Substrate is bound by residues H158 and E167. S176 is subject to Phosphoserine. T205 is subject to Phosphothreonine. E210 (proton donor) is an active-site residue. Position 229 is a phosphothreonine (T229). At Y236 the chain carries Phosphotyrosine. Mg(2+) is bound at residue D245. A Phosphoserine modification is found at S263. Positions 293 and 318 each coordinate substrate. Mg(2+) contacts are provided by E293 and D318. K343 serves as the catalytic Proton acceptor. Residues 370–373 (SHRS) and K394 each bind substrate.

This sequence belongs to the enolase family. As to quaternary structure, mammalian enolase is composed of 3 isozyme subunits, alpha, beta and gamma, which can form homodimers or heterodimers which are cell-type and development-specific. Interacts with PNKD. Mg(2+) serves as cofactor. As to expression, the alpha/alpha homodimer is expressed in embryo and in most adult tissues. The alpha/beta heterodimer and the beta/beta homodimer are found in striated muscle, and the alpha/gamma heterodimer and the gamma/gamma homodimer in neurons.

The protein resides in the cytoplasm. It carries out the reaction (2R)-2-phosphoglycerate = phosphoenolpyruvate + H2O. It functions in the pathway carbohydrate degradation; glycolysis; pyruvate from D-glyceraldehyde 3-phosphate: step 4/5. In terms of biological role, glycolytic enzyme that catalyzes the conversion of 2-phosphoglycerate to phosphoenolpyruvate. Appears to have a function in striated muscle development and regeneration. In Homo sapiens (Human), this protein is Beta-enolase (ENO3).